The chain runs to 504 residues: Ribose import ATP-binding protein RbsA (504 aa).

2 consecutive ABC transporter domains span residues leucine 6–arginine 242 and valine 252–threonine 495. ATP is bound at residue glycine 38–serine 45.

The protein belongs to the ABC transporter superfamily. Ribose importer (TC 3.A.1.2.1) family. As to quaternary structure, the complex is composed of an ATP-binding protein (RbsA), two transmembrane proteins (RbsC) and a solute-binding protein (RbsB).

It is found in the cell inner membrane. The catalysed reaction is D-ribose(out) + ATP + H2O = D-ribose(in) + ADP + phosphate + H(+). Functionally, part of the ABC transporter complex RbsABC involved in ribose import. Responsible for energy coupling to the transport system. This is Ribose import ATP-binding protein RbsA from Photobacterium profundum (strain SS9).